Consider the following 86-residue polypeptide: Large ribosomal subunit protein uL23 (86 aa).

Belongs to the universal ribosomal protein uL23 family. Part of the 50S ribosomal subunit. Contacts protein L29.

In terms of biological role, binds to 23S rRNA. One of the proteins that surrounds the polypeptide exit tunnel on the outside of the ribosome. The protein is Large ribosomal subunit protein uL23 of Methanothermobacter thermautotrophicus (strain ATCC 29096 / DSM 1053 / JCM 10044 / NBRC 100330 / Delta H) (Methanobacterium thermoautotrophicum).